Reading from the N-terminus, the 273-residue chain is UPF0173 metal-dependent hydrolase Bpro_4324 (273 aa).

The protein belongs to the UPF0173 family.

The protein is UPF0173 metal-dependent hydrolase Bpro_4324 of Polaromonas sp. (strain JS666 / ATCC BAA-500).